The sequence spans 196 residues: Type-4 uracil-DNA glycosylase (196 aa).

The [4Fe-4S] cluster site is built by Cys13 and Cys16. Residues 40 to 42 (GEA), Phe54, and Asn80 contribute to the uracil site. Cys84 and Cys100 together coordinate [4Fe-4S] cluster. Residue His162 participates in uracil binding.

This sequence belongs to the uracil-DNA glycosylase (UDG) superfamily. Type 4 (UDGa) family.

It carries out the reaction Hydrolyzes single-stranded DNA or mismatched double-stranded DNA and polynucleotides, releasing free uracil.. Functionally, removes uracil bases that are present in DNA as a result of either deamination of cytosine or misincorporation of dUMP instead of dTMP. Can remove uracil from double-stranded DNA containing either a U/G or U/A base pair as well as from single-stranded DNA. The protein is Type-4 uracil-DNA glycosylase of Pyrobaculum aerophilum (strain ATCC 51768 / DSM 7523 / JCM 9630 / CIP 104966 / NBRC 100827 / IM2).